The following is a 621-amino-acid chain: MRRSVCYVTPSVARAGQISTWRFEYSSANFLPEGTLLKFDLGIDGRPIDWEIPSTDLSQPCNTIYLETPSEDIVAAKAVYAPGGYIPTFEFTLPCDVEAGDTFSIILGSSPNFPQEDSSGNGAQLFTQRRKPFSLYVDPSGKGSFEDPDIFTMDIRGNVLKNIRIFAPSYVIKNKRFDITVRFEDEFGNLTNFSPEETHIELSYEHLRENLNWQLFIPETGFVILPNLYFNEPGIYRIQLRNQATKEVFTSAPIKCFAETSSHLLWGLLHGESERVDSEGNIESCLRYFRDDCALNFFATSSFEIQDGLTPETIKTINQTVADFNEEDRFIALSGAQYLSEEPGEGIREVLLMKEPKSPGKHKECKLFPLSKLYKQSTSHELISIPSFTASKKFGYNFNNFHPEFERVVEIYNAWGCSERTEAEGNPFPIKGSIDSENPEGTVLSALKRNLRFGFVAGGLDDRNLYNHFFDSDQQQYSPGLTAVICNKYSRDSLLEALYQRQCYATTGQRIIVNFQITSAPMGSELSTAIKPGLVINRHISGYVAGTAKIASIEIIRNEDILHTFHPDGNNFEYEYDDLSPFAQVTLKDPQNGAPFAFYYLRVTQENGAMAWSSPIWIDLN.

Positions 1–15 are cleaved as a signal peptide; sequence MRRSVCYVTPSVARA.

This sequence belongs to the chlamydial CPn_0512/CT_425/TC_0708 family.

This is an uncharacterized protein from Chlamydia trachomatis serovar D (strain ATCC VR-885 / DSM 19411 / UW-3/Cx).